The following is a 532-amino-acid chain: Fatty-acid amide hydrolase 2 (532 aa).

The helical transmembrane segment at 11 to 31 (LFLLRALGFLIGLVGRAALVL) threads the bilayer. Residues K131 and S206 each act as charge relay system in the active site. S230 acts as the Acyl-ester intermediate in catalysis.

This sequence belongs to the amidase family. Homodimer. In terms of tissue distribution, expressed in kidney, liver, lung, prostate, heart and ovary.

It localises to the membrane. The protein localises to the lipid droplet. The enzyme catalyses N-(5Z,8Z,11Z,14Z-eicosatetraenoyl)-ethanolamine + H2O = ethanolamine + (5Z,8Z,11Z,14Z)-eicosatetraenoate. It carries out the reaction (9Z)-octadecenamide + H2O = (9Z)-octadecenoate + NH4(+). It catalyses the reaction N-(9Z-octadecenoyl) ethanolamine + H2O = ethanolamine + (9Z)-octadecenoate. The catalysed reaction is N-hexadecanoylethanolamine + H2O = ethanolamine + hexadecanoate. Its activity is regulated as follows. Inhibited by O-aryl carbamates and alpha-keto heterocytes. Functionally, catalyzes the hydrolysis of endogenous amidated lipids like the sleep-inducing lipid oleamide ((9Z)-octadecenamide), the endocannabinoid anandamide (N-(5Z,8Z,11Z,14Z-eicosatetraenoyl)-ethanolamine), as well as other fatty amides, to their corresponding fatty acids, thereby regulating the signaling functions of these molecules. Hydrolyzes monounsaturated substrate anandamide preferentially as compared to polyunsaturated substrates. The chain is Fatty-acid amide hydrolase 2 (FAAH2) from Homo sapiens (Human).